Here is a 1629-residue protein sequence, read N- to C-terminus: Ferredoxin-dependent glutamate synthase 2, chloroplastic (1629 aa).

Residues 1–107 (MALQSPGATG…LEDIISERGA (107 aa)) constitute a chloroplast transit peptide. The active-site For GATase activity is the C108. Residues 108–507 (CGVGFIANLE…PGMMISVDLE (400 aa)) enclose the Glutamine amidotransferase type-2 domain. 1186-1243 (LAETQKTLIGNGLRERVIIRVDGGFKSGVDVLIAAAMGADEYGFGTLAMIATGCIMAR) lines the FMN pocket. Positions 1239, 1245, and 1250 each coordinate [3Fe-4S] cluster. A disordered region spans residues 1599-1629 (SEEDTPEANSDHILKTTTGDEEQVSSTLAEK).

The protein belongs to the glutamate synthase family. It depends on [3Fe-4S] cluster as a cofactor. FAD is required as a cofactor. FMN serves as cofactor. In terms of tissue distribution, expressed predominantly in roots and slightly in leaves. Low expression in the leaf mesophyll and phloem companion cell-sieve element complex.

The protein localises to the plastid. It is found in the chloroplast stroma. It carries out the reaction 2 oxidized [2Fe-2S]-[ferredoxin] + 2 L-glutamate = L-glutamine + 2 reduced [2Fe-2S]-[ferredoxin] + 2-oxoglutarate + 2 H(+). It participates in amino-acid biosynthesis; L-glutamate biosynthesis via GLT pathway; L-glutamate from 2-oxoglutarate and L-glutamine (ferredoxin route): step 1/1. The protein operates within energy metabolism; nitrogen metabolism. Its function is as follows. May play a role in primary nitrogen assimilation in roots. Could supply a constitutive level of glutamate to maintain a basal level of protein synthesis. This chain is Ferredoxin-dependent glutamate synthase 2, chloroplastic (GLU2), found in Arabidopsis thaliana (Mouse-ear cress).